A 440-amino-acid polypeptide reads, in one-letter code: tRNA-2-methylthio-N(6)-dimethylallyladenosine synthase (440 aa).

The region spanning 7–123 is the MTTase N-terminal domain; sequence NTFYIHTFGC…LPQLIEQARS (117 aa). 6 residues coordinate [4Fe-4S] cluster: Cys16, Cys52, Cys86, Cys159, Cys163, and Cys166. In terms of domain architecture, Radical SAM core spans 145 to 375; the sequence is RQGSISAFVP…IDLQNTISGE (231 aa). The 63-residue stretch at 378–440 folds into the TRAM domain; it reads QQAIGSVVEV…TSATLTGRPV (63 aa).

Belongs to the methylthiotransferase family. MiaB subfamily. In terms of assembly, monomer. Requires [4Fe-4S] cluster as cofactor.

The protein localises to the cytoplasm. The catalysed reaction is N(6)-dimethylallyladenosine(37) in tRNA + (sulfur carrier)-SH + AH2 + 2 S-adenosyl-L-methionine = 2-methylsulfanyl-N(6)-dimethylallyladenosine(37) in tRNA + (sulfur carrier)-H + 5'-deoxyadenosine + L-methionine + A + S-adenosyl-L-homocysteine + 2 H(+). In terms of biological role, catalyzes the methylthiolation of N6-(dimethylallyl)adenosine (i(6)A), leading to the formation of 2-methylthio-N6-(dimethylallyl)adenosine (ms(2)i(6)A) at position 37 in tRNAs that read codons beginning with uridine. The protein is tRNA-2-methylthio-N(6)-dimethylallyladenosine synthase of Pelodictyon phaeoclathratiforme (strain DSM 5477 / BU-1).